The chain runs to 336 residues: Large ribosomal subunit protein uL3 (336 aa).

Disordered regions lie at residues 1–43 (MPQP…QGFA), 205–230 (ITKG…HARQ), and 311–336 (RPAV…SNQG). Positions 219 to 230 (GVQKRKGKHARQ) are enriched in basic residues.

This sequence belongs to the universal ribosomal protein uL3 family. In terms of assembly, part of the 50S ribosomal subunit. Forms a cluster with proteins L14 and L24e.

Functionally, one of the primary rRNA binding proteins, it binds directly near the 3'-end of the 23S rRNA, where it nucleates assembly of the 50S subunit. This is Large ribosomal subunit protein uL3 from Natronomonas pharaonis (strain ATCC 35678 / DSM 2160 / CIP 103997 / JCM 8858 / NBRC 14720 / NCIMB 2260 / Gabara) (Halobacterium pharaonis).